The chain runs to 509 residues: GMP synthase [glutamine-hydrolyzing] (509 aa).

Residues 4–193 enclose the Glutamine amidotransferase type-1 domain; that stretch reads KILILDFGSQ…VVHICGCSQD (190 aa). The Nucleophile role is filled by C79. Residues H167 and E169 contribute to the active site. Residues 194-384 enclose the GMPS ATP-PPase domain; that stretch reads WTPDAFVETT…LGIDDIILKR (191 aa). Position 221–227 (221–227) interacts with ATP; sequence SGGVDSS.

As to quaternary structure, homodimer.

The catalysed reaction is XMP + L-glutamine + ATP + H2O = GMP + L-glutamate + AMP + diphosphate + 2 H(+). Its pathway is purine metabolism; GMP biosynthesis; GMP from XMP (L-Gln route): step 1/1. Its function is as follows. Catalyzes the synthesis of GMP from XMP. This Cytophaga hutchinsonii (strain ATCC 33406 / DSM 1761 / CIP 103989 / NBRC 15051 / NCIMB 9469 / D465) protein is GMP synthase [glutamine-hydrolyzing].